A 351-amino-acid chain; its full sequence is Inner kinetochore subunit fta2 (351 aa).

The tract at residues 1 to 71 (MSGRRYSQIS…SSNGRVDTDR (71 aa)) is disordered. Positions 7–18 (SQISQQEGSSSS) are enriched in low complexity. The span at 54 to 66 (NENSGQSKSSNGR) shows a compositional bias: polar residues.

It belongs to the CENP-P/CTF19 family. In terms of assembly, component of the heterotetrameric kinetochore subcomplex COMA, which consists of fta2, fta7, mal2 and mis17. The COMA subcomplex is part of a larger constitutive centromere-associated network (CCAN) (also known as central kinetochore Sim4 complex in fission yeast), which is composed of at least cnl2, cnp3, cnp20, fta1, fta2, fta3, fta4, fta6, fta7, mal2, mhf1, mhf2, mis6, mis15, mis17, sim4 and wip1.

It is found in the nucleus. The protein resides in the chromosome. It localises to the centromere. Its subcellular location is the kinetochore. In terms of biological role, component of the kinetochore, a multiprotein complex that assembles on centromeric DNA and attaches chromosomes to spindle microtubules, mediating chromosome segregation and sister chromatid segregation during meiosis and mitosis. Component of the inner kinetochore COMA complex, which connects centromere-associated proteins and the outer kinetochore. COMA interacts with other inner kinetochore proteins to form the inner kinetochore constitutive centromere-associated network (CCAN), which serves as a structural platform for outer kinetochore assembly. Fta2, fta3 and fta4 associate with the central core (cnt) and inner repeat (inr) region of the centromere. The protein is Inner kinetochore subunit fta2 (fta2) of Schizosaccharomyces pombe (strain 972 / ATCC 24843) (Fission yeast).